A 1226-amino-acid chain; its full sequence is Receptor-type tyrosine-protein phosphatase O (1226 aa).

A signal peptide spans 1–29 (MGHLPRGTLGGRRLLPLLGLFVLLKIVTT). The 86-residue stretch at 30–115 (FHVAVQDDNN…TKPSRSITVL (86 aa)) folds into the Fibronectin type-III 1 domain. The Extracellular portion of the chain corresponds to 30–832 (FHVAVQDDNN…VTEVNPNVVV (803 aa)). Residues N75, N154, and N227 are each glycosylated (N-linked (GlcNAc...) asparagine). The tract at residues 242 to 305 (EPSGSFPEDS…PNSTDYESTS (64 aa)) is disordered. Over residues 260-270 (IGRDRRFHFPE) the composition is skewed to basic and acidic residues. Positions 277–291 (PSNVSSGSPPSNVSS) are enriched in low complexity. N-linked (GlcNAc...) asparagine glycosylation occurs at N279. The span at 296 to 305 (PNSTDYESTS) shows a compositional bias: polar residues. Fibronectin type-III domains lie at 339–435 (RTEK…ISPT), 445–541 (KPQH…IVPT), 542–638 (GIKD…TISF), 641–734 (APVA…LEPA), and 735–827 (PPKS…TEVN). N-linked (GlcNAc...) asparagine glycans are attached at residues N471 and N500. Residues N710, N743, and N800 are each glycosylated (N-linked (GlcNAc...) asparagine). Residues 833 to 853 (ISVLAILSTLLIGLLLVTLVI) form a helical membrane-spanning segment. The Cytoplasmic portion of the chain corresponds to 854-1226 (LRKKHLQMAR…DVIYENVSKS (373 aa)). At S875 the chain carries Phosphoserine. One can recognise a Tyrosine-protein phosphatase domain in the interval 948 to 1205 (FSLQFEELKL…IFIHQCVQLM (258 aa)). Substrate-binding positions include D1112, 1146–1152 (CSAGVGR), and Q1190. Catalysis depends on C1146, which acts as the Phosphocysteine intermediate. A Phosphotyrosine modification is found at Y1220.

This sequence belongs to the protein-tyrosine phosphatase family. Receptor class 3 subfamily. As to quaternary structure, interacts (phosphorylated form) with FYN and GRB2.

It is found in the membrane. It carries out the reaction O-phospho-L-tyrosyl-[protein] + H2O = L-tyrosyl-[protein] + phosphate. Its function is as follows. Possesses tyrosine phosphatase activity. Plays a role in regulating the glomerular pressure/filtration rate relationship through an effect on podocyte structure and function. This Mus musculus (Mouse) protein is Receptor-type tyrosine-protein phosphatase O (Ptpro).